Consider the following 280-residue polypeptide: P32 adhesin (280 aa).

The next 2 helical transmembrane spans lie at 13 to 37 (FIVL…ALVV) and 68 to 92 (WFIP…AIGL). Residues 114 to 128 (EQLQRISDQQEQQTV) are compositionally biased toward polar residues. 2 disordered regions span residues 114 to 149 (EQLQ…QPLQ) and 163 to 280 (FNPN…GLKP). Composition is skewed to low complexity over residues 132-149 (PQQS…QPLQ) and 168-188 (QQRP…NFNP). 13 tandem repeats follow at residues 163–168 (FNPNMQ), 170–174 (RPGFN), 186–190 (FNPRM), 191–195 (NPNMQ), 196–200 (RPGFN), 199–204 (FNPNMQ), 206–210 (RPGFN), 222–226 (FNPRM), 227–231 (NPNMQ), 232–236 (RPGFN), 249–254 (FNPNMQ), 256–260 (RPGFN), and 259–264 (FNPNMQ). The interval 163 to 264 (FNPNMQQRPG…QRPGFNPNMQ (102 aa)) is 6 X 5 AA repeats of [FM]-N-P-N-M-Q. Positions 170 to 260 (RPGFNQPNQQ…PNMQQRPGFN (91 aa)) are 5 X 5 AA repeats of R-P-G-F-N. A 2 X 5 AA repeats of F-N-P-R-M region spans residues 186 to 226 (FNPRMNPNMQRPGFNPNMQQRPGFNQPNQQFQPHNNFNPRM). Residues 204–224 (QQRPGFNQPNQQFQPHNNFNP) are compositionally biased toward low complexity. Over residues 235-257 (FNQPHPNQFAQPNNFNPNMQQRP) the composition is skewed to low complexity. Residues 261–271 (PNMQQRPNPSQ) are compositionally biased toward polar residues.

The protein resides in the cell projection. It is found in the attachment organelle membrane. In terms of biological role, adhesin necessary for successful cytadherence and virulence. The chain is P32 adhesin from Mycoplasma genitalium (strain ATCC 33530 / DSM 19775 / NCTC 10195 / G37) (Mycoplasmoides genitalium).